The chain runs to 235 residues: RING-H2 finger protein ATL33 (235 aa).

A helical transmembrane segment spans residues 64-84 (LIFVVIAFVAVPALVYALFFN). The segment at 87–133 (CSSSRRNSSSSRTSSSSDDTPHATVDTPPITETTVTSESGGKFHKDT) is disordered. Residues 88 to 103 (SSSRRNSSSSRTSSSS) are compositionally biased toward low complexity. Polar residues predominate over residues 116-125 (ITETTVTSES). An RING-type; atypical zinc finger spans residues 142–184 (CSVCLMVFTDSDELRQLSECKHAFHVLCIETWLKDHPNCPICR). The segment covering 201-216 (NVNGNVNRSGGNRRVS) has biased composition (low complexity). A disordered region spans residues 201 to 235 (NVNGNVNRSGGNRRVSATSRDDDWRQGLPDASSLV).

The protein belongs to the RING-type zinc finger family. ATL subfamily.

It is found in the membrane. It carries out the reaction S-ubiquitinyl-[E2 ubiquitin-conjugating enzyme]-L-cysteine + [acceptor protein]-L-lysine = [E2 ubiquitin-conjugating enzyme]-L-cysteine + N(6)-ubiquitinyl-[acceptor protein]-L-lysine.. The protein operates within protein modification; protein ubiquitination. The polypeptide is RING-H2 finger protein ATL33 (ATL33) (Arabidopsis thaliana (Mouse-ear cress)).